We begin with the raw amino-acid sequence, 439 residues long: Mitochondrial distribution and morphology protein 10 (439 aa).

Residues 275–305 (LPDATPPSFQVPSSSSSSSNPVSPSTSQPPT) are disordered. A compositionally biased stretch (low complexity) spans 280–305 (PPSFQVPSSSSSSSNPVSPSTSQPPT).

It belongs to the MDM10 family. As to quaternary structure, component of the ER-mitochondria encounter structure (ERMES) or MDM complex, composed of MMM1, MDM10, MDM12 and MDM34. Associates with the mitochondrial outer membrane sorting assembly machinery SAM(core) complex.

Its subcellular location is the mitochondrion outer membrane. Functionally, component of the ERMES/MDM complex, which serves as a molecular tether to connect the endoplasmic reticulum and mitochondria. Components of this complex are involved in the control of mitochondrial shape and protein biogenesis and may function in phospholipid exchange. MDM10 is involved in the late assembly steps of the general translocase of the mitochondrial outer membrane (TOM complex). Functions in the TOM40-specific route of the assembly of outer membrane beta-barrel proteins, including the association of TOM40 with the receptor TOM22 and small TOM proteins. Can associate with the SAM(core) complex as well as the MDM12-MMM1 complex, both involved in late steps of the major beta-barrel assembly pathway, that is responsible for biogenesis of all outer membrane beta-barrel proteins. May act as a switch that shuttles between both complexes and channels precursor proteins into the TOM40-specific pathway. Plays a role in mitochondrial morphology and in the inheritance of mitochondria. The polypeptide is Mitochondrial distribution and morphology protein 10 (Laccaria bicolor (strain S238N-H82 / ATCC MYA-4686) (Bicoloured deceiver)).